The primary structure comprises 352 residues: Glycogen synthase kinase 3 (352 aa).

Positions Tyr-20–Phe-310 constitute a Protein kinase domain. ATP-binding positions include Ala-26–Val-34 and Lys-49. The Proton acceptor role is filled by Asp-152.

The protein belongs to the protein kinase superfamily. CMGC Ser/Thr protein kinase family. GSK-3 subfamily. As to quaternary structure, inhibited by cyclin kinase 2 (CDK2) inhibitors, including GW8510.

The catalysed reaction is L-seryl-[tau protein] + ATP = O-phospho-L-seryl-[tau protein] + ADP + H(+). It carries out the reaction L-threonyl-[tau protein] + ATP = O-phospho-L-threonyl-[tau protein] + ADP + H(+). This is Glycogen synthase kinase 3 from Trypanosoma brucei brucei (strain 927/4 GUTat10.1).